The primary structure comprises 313 residues: MKKNTKISVIGAGFVGSSTVFALMNGGLASEIVIVDVNKDKAEGEAMDLSHGAAFVKPVVVKSGDYKDTEGSDIVIITAGAAQKPGETRLELINKNYNIFKSIVPEVVKYNPNAILLVVSNPVDILTYITYKLSGFPKSRVIGSGTVLDTSRFRYMLSEHFEIDVRNIHTYIMGEHGDSEIATWSLTNIAGMDVNEYCEASCKKCDGSLKYKIYDDVKNAAYHVIEKKGATYYAVALAVKRIVEAILRDENSILTVSSLLEGQYGIKDVYMGVPSIVGINGVKDIIEVPLNDEEKNNLTDSAKTLKESLDSIF.

NAD(+) contacts are provided by residues valine 15, aspartate 36, lysine 41, tyrosine 66, and 80-81 (GA). Substrate-binding residues include glutamine 83 and arginine 89. NAD(+) is bound by residues serine 102, 119–121 (VSN), and serine 144. 121–124 (NPVD) contributes to the substrate binding site. 149-152 (DTSR) lines the substrate pocket. Beta-D-fructose 1,6-bisphosphate is bound by residues arginine 154 and histidine 169. Histidine 176 functions as the Proton acceptor in the catalytic mechanism. At tyrosine 222 the chain carries Phosphotyrosine. Substrate is bound at residue threonine 231.

It belongs to the LDH/MDH superfamily. LDH family. Homotetramer.

The protein resides in the cytoplasm. The catalysed reaction is (S)-lactate + NAD(+) = pyruvate + NADH + H(+). It participates in fermentation; pyruvate fermentation to lactate; (S)-lactate from pyruvate: step 1/1. Allosterically activated by fructose 1,6-bisphosphate (FBP). Catalyzes the conversion of lactate to pyruvate. The chain is L-lactate dehydrogenase 1 from Clostridium acetobutylicum (strain ATCC 824 / DSM 792 / JCM 1419 / IAM 19013 / LMG 5710 / NBRC 13948 / NRRL B-527 / VKM B-1787 / 2291 / W).